A 434-amino-acid polypeptide reads, in one-letter code: Histidinol dehydrogenase (434 aa).

3 residues coordinate NAD(+): Tyr130, Gln188, and Asn211. Residues Ser237, Gln259, and His262 each coordinate substrate. Residues Gln259 and His262 each contribute to the Zn(2+) site. Catalysis depends on proton acceptor residues Glu326 and His327. His327, Asp360, Glu414, and His419 together coordinate substrate. Asp360 is a Zn(2+) binding site. His419 provides a ligand contact to Zn(2+).

The protein belongs to the histidinol dehydrogenase family. In terms of assembly, homodimer. It depends on Zn(2+) as a cofactor. The cofactor is Mn(2+).

The catalysed reaction is L-histidinol + 2 NAD(+) + H2O = L-histidine + 2 NADH + 3 H(+). Its pathway is amino-acid biosynthesis; L-histidine biosynthesis; L-histidine from 5-phospho-alpha-D-ribose 1-diphosphate: step 9/9. Activity is lost when the metal is removed through urea denaturation or chelation, and can be regained by addition of metal. Functionally, catalyzes the sequential NAD-dependent oxidations of L-histidinol to L-histidinaldehyde and then to L-histidine. This Salmonella typhimurium (strain LT2 / SGSC1412 / ATCC 700720) protein is Histidinol dehydrogenase (hisD).